Reading from the N-terminus, the 685-residue chain is MTDAKNNLLYFFDRPNEPCFMQKGEDKVVFEIPDHYYPDKYKSLSNTLSNRFGNEATKRIPIRNITLPNLEVPMQLPYNDQFSLFVPKHRTMAAKLIDIFMGMRDVEDLQSVCSYCQLRINPYMFNYCLSVAILHRPDTKGLSIPTFAETFPDKFMDSKVFLRAREVSNVVISGSRMPVNVPINYTANTTEPEQRVAYFREDIGINLHHWHWHLVYPFDSADRSIVNKDRRGELFYYMHQQIIGRYNVERMCNGLPQVKPFSDFSAPIEEGYFPKLDSQVASRTWPPRFAGSVFRNLDRTVDQVKIDVRKLFTWRDQFLEAIQKMAIKMPNGRELPLDEVTGIDMLGNLMESSIISPNRGYYGDLHNMGHVFAAYTHDPDHRHLEQFGVMGDSATAMRDPFFYRWHRFVDDVFNIYKEKLTPYTNERLDFPGVRVSSVGIEGARPNTLRTLWQQSTVELGRGLDFTPRGSVLARFTHLQHDEFQYVIEVNNTTGGNLMGTVRIFMAPKVDDNGQPMSFNKQRRLMIELDKFSQALRPGTNTIRRRSVDSSVTIPYERTFRNQSERPGDPGTAGAAEFDFCGCGWPHHMLIPKGTAQGYPVVLFVMISNWNNDRIEQDLVGSCNDAASYCGIRDRKYPDKQAMGYPFDRKMANDAATLSDFLRPNMAVRDCSIQFSDTTVERGQQG.

Residues His-209, His-213, and His-239 each coordinate Cu cation. Residue Glu-351 is the Proton acceptor of the active site. Residues His-366, His-370, and His-406 each coordinate Cu cation. Intrachain disulfides connect Cys-580–Cys-622 and Cys-582–Cys-629.

Heterodimer. Forms a complex with an interleukin 1-like protein as a consequence of a host defense response. It depends on Cu(2+) as a cofactor. In terms of processing, the N-terminus is blocked. Synthesized by oenocytoids, a type of hemocyte, and released into the hemolymph plasma.

It localises to the secreted. It carries out the reaction 2 L-dopa + O2 = 2 L-dopaquinone + 2 H2O. The catalysed reaction is L-tyrosine + O2 = L-dopaquinone + H2O. Activated by immulectin and lipopolysaccharide. This is a copper-containing oxidase that functions in the formation of pigments such as melanins and other polyphenolic compounds. Catalyzes the rate-limiting conversions of tyrosine to DOPA, DOPA to DOPA-quinone and possibly 5,6 dihydroxyindole to indole-5'6 quinone. Binds to the surface of hemocytes and is involved in hemocyte melanization. This Manduca sexta (Tobacco hawkmoth) protein is Phenoloxidase subunit 1.